Reading from the N-terminus, the 603-residue chain is Nuclear receptor subfamily 2 group C member 1 (603 aa).

The tract at residues 1-178 (MATIEEIAHQ…RLQRCIAFGM (178 aa)) is required for interaction with KAT2B. The segment at residues 110-185 (FDLCVVCGDK…FGMKQDSVQC (76 aa)) is a DNA-binding region (nuclear receptor). NR C4-type zinc fingers lie at residues 113-133 (CVVC…CEGC) and 149-173 (CRGS…LQRC). Residues serine 197 and serine 215 each carry the phosphoserine modification. A Phosphothreonine modification is found at threonine 220. Threonine 222 carries the phosphothreonine; by MAPK1 modification. Lysine 250 is covalently cross-linked (Glycyl lysine isopeptide (Lys-Gly) (interchain with G-Cter in SUMO2)). The NR LBD domain maps to 348–590 (GSVHLITGDS…SVIPHILKME (243 aa)). Serine 581 bears the Phosphoserine; by PKC mark. The tract at residues 584–603 (PHILKMEPADYNSQIIGHSI) is required for interaction with NRIP1. A Glycyl lysine isopeptide (Lys-Gly) (interchain with G-Cter in SUMO2) cross-link involves residue lysine 588.

This sequence belongs to the nuclear hormone receptor family. NR2 subfamily. As to quaternary structure, homodimer. Heterodimer; binds DNA as a heterodimer with NR2C2 required for chromatin remodeling and for binding to promoter regions such as globin DR1 repeats. Interacts with NRIP1 (via its LXXLL motifs); the interaction provides corepressor activity. Interacts with HDAC3 (via the DNA-binding domain). Interacts with HDAC4 (via the DNA-binding domain). Interacts with PIAS1; the interaction is required for sumoylation of NR2C1. Interacts with UBE2I; the interaction is required for sumoylation of NR2C1. Interacts with KAT2B; the interaction acts as a corepressor of gene expression. Interacts with ESR1; the interaction prevents homodimerization of ESR1 and suppresses its transcriptional activity and cell growth. Post-translationally, sumoylation requires both PIAS1 and UBE2I. Sumoylation appears to dissociate NR2C1 from the PML nuclear bodies. Enhances the interaction with NRIP1 but inhibits interaction with KAT2B. In proliferating cells, stimulation by all-trans retinoic acid, activation of MAPK1-mediated phosphorylation and recruitment to PML bodies with subsequent sumoylation, suppresses OCT4 expression. Phosphorylated on several serine and threonine residues. Phosphorylation on Thr-222, stimulated by all-trans retinoic acid (atRA) mediates PML location and sumoylation in proliferating cells which then modulates its association with effector molecules, KAT2B and NRIP1. Phosphorylation on Ser-581 by PKC is important for protein stability and function as activator of RARB.

Its subcellular location is the nucleus. The protein resides in the PML body. Orphan nuclear receptor. Binds the IR7 element in the promoter of its own gene in an autoregulatory negative feedback mechanism. Primarily repressor of a broad range of genes. Binds to hormone response elements (HREs) consisting of two 5'-AGGTCA-3' half site direct repeat consensus sequences. Together with NR2C2, forms the core of the DRED (direct repeat erythroid-definitive) complex that represses embryonic and fetal globin transcription. Also activator of OCT4 gene expression. May be involved in stem cell proliferation and differentiation. Mediator of retinoic acid-regulated preadipocyte proliferation. In Homo sapiens (Human), this protein is Nuclear receptor subfamily 2 group C member 1 (NR2C1).